The following is a 142-amino-acid chain: Prefoldin subunit alpha 2 (142 aa).

It belongs to the prefoldin subunit alpha family. In terms of assembly, heterohexamer of two alpha and four beta subunits.

The protein localises to the cytoplasm. Its function is as follows. Molecular chaperone capable of stabilizing a range of proteins. Seems to fulfill an ATP-independent, HSP70-like function in archaeal de novo protein folding. The chain is Prefoldin subunit alpha 2 from Thermococcus kodakarensis (strain ATCC BAA-918 / JCM 12380 / KOD1) (Pyrococcus kodakaraensis (strain KOD1)).